The chain runs to 176 residues: Peptide methionine sulfoxide reductase MsrA (176 aa).

Residue Cys10 is part of the active site.

Belongs to the MsrA Met sulfoxide reductase family.

The catalysed reaction is L-methionyl-[protein] + [thioredoxin]-disulfide + H2O = L-methionyl-(S)-S-oxide-[protein] + [thioredoxin]-dithiol. It catalyses the reaction [thioredoxin]-disulfide + L-methionine + H2O = L-methionine (S)-S-oxide + [thioredoxin]-dithiol. Functionally, has an important function as a repair enzyme for proteins that have been inactivated by oxidation. Catalyzes the reversible oxidation-reduction of methionine sulfoxide in proteins to methionine. This is Peptide methionine sulfoxide reductase MsrA from Leptospira borgpetersenii serovar Hardjo-bovis (strain L550).